The following is a 300-amino-acid chain: 4-hydroxy-tetrahydrodipicolinate synthase (300 aa).

Thr46 contacts pyruvate. The active-site Proton donor/acceptor is Tyr135. Lys163 (schiff-base intermediate with substrate) is an active-site residue. Val205 is a binding site for pyruvate.

Belongs to the DapA family. In terms of assembly, homotetramer; dimer of dimers.

The protein localises to the cytoplasm. It carries out the reaction L-aspartate 4-semialdehyde + pyruvate = (2S,4S)-4-hydroxy-2,3,4,5-tetrahydrodipicolinate + H2O + H(+). Its pathway is amino-acid biosynthesis; L-lysine biosynthesis via DAP pathway; (S)-tetrahydrodipicolinate from L-aspartate: step 3/4. Its function is as follows. Catalyzes the condensation of (S)-aspartate-beta-semialdehyde [(S)-ASA] and pyruvate to 4-hydroxy-tetrahydrodipicolinate (HTPA). The protein is 4-hydroxy-tetrahydrodipicolinate synthase of Koribacter versatilis (strain Ellin345).